Consider the following 604-residue polypeptide: Matrix metalloproteinase-21 (604 aa).

Positions 1–22 (MPSIKLLVWCCLCVISPRLCHS) are cleaved as a signal peptide. Positions 23 to 180 (EKLFHSRDRS…PDPPKIRRKR (158 aa)) are excised as a propeptide. Positions 132 to 175 (KPRCGVPDNQMAKKETEKPTAAQSLENKTKDSENVTQQNPDPPK) are disordered. The Cysteine switch motif lies at 133-140 (PRCGVPDN). Zn(2+) is bound at residue C135. N158 and N165 each carry an N-linked (GlcNAc...) asparagine glycan. A Zn(2+)-binding site is contributed by H318. Residue E319 is part of the active site. Zn(2+) contacts are provided by H322 and H328. Cysteines 364 and 595 form a disulfide. Hemopexin repeat units lie at residues 365–424 (EGPF…WHGI), 426–482 (VQNI…FPGI), 483–531 (PSPI…FPAV), and 538–594 (KGNI…WFDI). N404 and N407 each carry an N-linked (GlcNAc...) asparagine glycan.

This sequence belongs to the peptidase M10A family. Zn(2+) serves as cofactor. Ca(2+) is required as a cofactor. Post-translationally, the precursor is cleaved by a furin endopeptidase.

It localises to the secreted. In terms of biological role, plays a specialized role in the generation of left-right asymmetry during embryogenesis. May act as a negative regulator of the NOTCH-signaling pathway. The chain is Matrix metalloproteinase-21 (mmp21) from Xenopus laevis (African clawed frog).